The chain runs to 606 residues: Glutamine--fructose-6-phosphate aminotransferase [isomerizing] (606 aa).

The Nucleophile; for GATase activity role is filled by Cys-2. Residues 2 to 218 (CGIFGYLGQR…SGELAVLRIG (217 aa)) enclose the Glutamine amidotransferase type-2 domain. SIS domains follow at residues 278-424 (FAES…QRQE) and 455-596 (WRCR…VDRP). Lys-601 acts as the For Fru-6P isomerization activity in catalysis.

In terms of assembly, homodimer.

The protein localises to the cytoplasm. The catalysed reaction is D-fructose 6-phosphate + L-glutamine = D-glucosamine 6-phosphate + L-glutamate. Functionally, catalyzes the first step in hexosamine metabolism, converting fructose-6P into glucosamine-6P using glutamine as a nitrogen source. This Chlamydia muridarum (strain MoPn / Nigg) protein is Glutamine--fructose-6-phosphate aminotransferase [isomerizing].